A 301-amino-acid polypeptide reads, in one-letter code: UDP-N-acetylenolpyruvoylglucosamine reductase 1 (301 aa).

Residues 29–196 (KIGGPADILI…LEAEFQLQIG (168 aa)) enclose the FAD-binding PCMH-type domain. Arg174 is an active-site residue. The active-site Proton donor is the Ser225. Glu295 is an active-site residue.

The protein belongs to the MurB family. Requires FAD as cofactor.

It localises to the cytoplasm. It carries out the reaction UDP-N-acetyl-alpha-D-muramate + NADP(+) = UDP-N-acetyl-3-O-(1-carboxyvinyl)-alpha-D-glucosamine + NADPH + H(+). The protein operates within cell wall biogenesis; peptidoglycan biosynthesis. In terms of biological role, cell wall formation. The chain is UDP-N-acetylenolpyruvoylglucosamine reductase 1 from Bacillus cereus (strain ZK / E33L).